An 848-amino-acid chain; its full sequence is DIS3-like exonuclease 2 (848 aa).

The disordered stretch occupies residues 153-173; sequence KGDRNSGKTDNNSPNKTEKRC. Mg(2+) contacts are provided by Asp-345 and Asp-354.

The protein belongs to the RNR ribonuclease family. DIS3L2 subfamily. Requires Mg(2+) as cofactor. It depends on Mn(2+) as a cofactor. Post-translationally, cleaved by caspase ced-3 in vitro.

It is found in the cytoplasm. It localises to the P-body. Its function is as follows. 3'-5'-exoribonuclease that specifically recognizes RNAs polyuridylated at their 3' end and mediates their degradation. Component of an exosome-independent RNA degradation pathway that mediates degradation of cytoplasmic mRNAs that have been deadenylated and subsequently uridylated at their 3'. In Caenorhabditis elegans, this protein is DIS3-like exonuclease 2.